Consider the following 324-residue polypeptide: bZIP transcription factor 46 (324 aa).

The disordered stretch occupies residues 106-127; sequence LGGSDDEDPAAAAAAAAPAQRQ. The segment covering 115 to 124 has biased composition (low complexity); the sequence is AAAAAAAAPA. The bZIP domain maps to 242 to 287; sequence VERRQRRMIKNRESAARSRARKQAYIMELEAEVAKLKEQKAELQKK. Positions 244–263 are basic motif; sequence RRQRRMIKNRESAARSRARK. Residues 270 to 284 are leucine-zipper; the sequence is LEAEVAKLKEQKAEL.

In terms of assembly, interacts with MODD. Interacts with SAPK2, SAPK6 and SAPK9. In terms of processing, phosphorylated on serine and threonine residues by SAPK2, SAPK6 and SAPK9. Phosphorylation is required for full transactivation activity. Expressed in roots, shoots, leaves, flag leaves, stems, flowers and panicles. Widely expressed.

The protein localises to the nucleus. In terms of biological role, transcription factor involved in abscisic acid (ABA) signaling pathway. Transcription factor activity is fully activated by ABA. Acts as a positive regulator of the expression of abiotic stress-responsive genes through an ABA-dependent signaling pathway. Acts as a positive regulator of ABA signaling and drought stress tolerance. Plays an important role in ABA and auxin responses. Involved in ABA signaling and stress responses by directly binding to the ABA-responsive element (ABRE)-containing genes, especially WRKY family genes. Modulates response to auxin. Suppresses auxin signaling by targeting ABRE-containing genes related to auxin metabolism or signaling. This Oryza sativa subsp. japonica (Rice) protein is bZIP transcription factor 46.